A 372-amino-acid chain; its full sequence is 12-oxophytodienoate reductase 1 (372 aa).

An N-acetylmethionine modification is found at M1. Residues 31–33 (PLT), A64, and Q106 contribute to the FMN site. H183 is a substrate binding site. The Proton donor role is filled by Y188. R235 lines the FMN pocket. R275 provides a ligand contact to substrate. Residues 303–305 (AGG) and 326–327 (GR) contribute to the FMN site.

This sequence belongs to the NADH:flavin oxidoreductase/NADH oxidase family. FMN serves as cofactor. Mostly expressed in roots, also present in leaves, shoots and flowers. More abundant in cotyledons. In more details, expressed in peduncles, sepals, petals, around the abscission zone of siliques, maturing siliques and developing seeds.

The protein resides in the cytoplasm. It catalyses the reaction (1S,2S)-OPC-8 + NADP(+) = (9S,13S,15Z)-12-oxophyto-10,15-dienoate + NADPH + H(+). The protein operates within lipid metabolism; oxylipin biosynthesis. Specifically cleaves olefinic bonds in alpha,beta-unsaturated carbonyls and may be involved in detoxification or modification of these reactive compounds. May be involved in the biosynthesis or metabolism of oxylipin signaling molecules. In vitro, reduces 9R,13R-12-oxophytodienoic acid (9R,13R-OPDA) to 9R,13R-OPC-8:0, but only poorly 9S,13S-OPDA, the natural precursor of jasmonic acid. Can detoxify the explosive 2,4,6-trinitrotoluene (TNT) in vitro and in vivo by catalyzing its nitroreduction to form hydroxylamino-dinitrotoluene (HADNT). In Arabidopsis thaliana (Mouse-ear cress), this protein is 12-oxophytodienoate reductase 1.